Here is a 224-residue protein sequence, read N- to C-terminus: Mammalian ependymin-related protein 1 (224 aa).

The first 37 residues, 1–37, serve as a signal peptide directing secretion; that stretch reads MPGRAPLHTVPGALGPWLLGCLWAWTLCGLCSLGAVG. Disulfide bonds link Cys-42–Cys-172, Cys-88–Cys-222, and Cys-113–Cys-210. 2 N-linked (GlcNAc...) asparagine glycosylation sites follow: Asn-130 and Asn-182.

Belongs to the ependymin family. In terms of assembly, homodimer. In terms of processing, N-glycosylated; the glycan contains mannose-6-phosphate moieties.

The protein localises to the lysosome lumen. It localises to the secreted. In terms of biological role, binds anionic lipids and gangliosides at acidic pH. The protein is Mammalian ependymin-related protein 1 (EPDR1) of Macaca fascicularis (Crab-eating macaque).